The chain runs to 171 residues: uncharacterized protein (171 aa).

This is an uncharacterized protein from Rhizobium etli.